Reading from the N-terminus, the 235-residue chain is Aspartate/glutamate leucyltransferase (235 aa).

Belongs to the R-transferase family. Bpt subfamily.

It is found in the cytoplasm. The catalysed reaction is N-terminal L-glutamyl-[protein] + L-leucyl-tRNA(Leu) = N-terminal L-leucyl-L-glutamyl-[protein] + tRNA(Leu) + H(+). It carries out the reaction N-terminal L-aspartyl-[protein] + L-leucyl-tRNA(Leu) = N-terminal L-leucyl-L-aspartyl-[protein] + tRNA(Leu) + H(+). Functions in the N-end rule pathway of protein degradation where it conjugates Leu from its aminoacyl-tRNA to the N-termini of proteins containing an N-terminal aspartate or glutamate. In Pseudomonas entomophila (strain L48), this protein is Aspartate/glutamate leucyltransferase.